Consider the following 238-residue polypeptide: MIAFIVLLSLAAVLQQSSGTVDFASESSNKKDYRREIVDKHNALRRSVKPTARNMLQMKWNSRAAQNAKRSADRCTFAHSPEHTRTVGKFRCGENIFMSSQPFAWSGVVQDWYDEIKNVVDGIGAKPPGSVIGHYTQIVWYKSHLLGCASAKCSSTKYLYVCQYCPAGNISSSIATPYKSGPSCGDCPSACVNGLCTNPCEYEDTFSNCKALAKKTKCKTEWIKSKCPATCFCHNKII.

Residues 1–19 form the signal peptide; sequence MIAFIVLLSLAAVLQQSSG. The region spanning 38 to 164 is the SCP domain; sequence VDKHNALRRS…STKYLYVCQY (127 aa). Cystine bridges form between Cys75–Cys153, Cys92–Cys165, Cys148–Cys162, Cys184–Cys191, Cys187–Cys196, Cys200–Cys233, Cys209–Cys227, and Cys218–Cys231. The ShKT domain maps to 200–233; it reads CEYEDTFSNCKALAKKTKCKTEWIKSKCPATCFC.

The protein belongs to the CRISP family. Expressed by the venom gland.

Its subcellular location is the secreted. Its function is as follows. Blocks contraction of smooth muscle elicited by high potassium-induced depolarization, but does not block caffeine-stimulated contraction. May target voltage-gated calcium channels on smooth muscle. This is Cysteine-rich venom protein 1 from Hydrophis hardwickii (Hardwick's spine-bellied seasnake).